A 755-amino-acid chain; its full sequence is MESTPFNRRQWTSLSLRVTAKELSLVNKNKSSTIVEIFSKYQKAAEEANMERKKNNTESLPQHFRRGTLSVLKKKWENPVAGAESHTDSLPNSSSDGGHTADHPPAEVTAKAAPGARADREEHTQPRSRFGSRPEAVTQCRYPRSEDSHDFKAQATESQNMENCLGDSRHEAEKPEMSENTETSGKIEKYNVPLNRLKMMFEKGEHSQNKSPWTQGRNAGGRRLSENSCSLDDLEIGAGHLSSSAFNSEKNESKRNLELPRLSETSIKDRMAKYQAAVSKQSSPASYASELKPSESKTHKWEQKENVPPGPEACSIHQEGSKVSATENSLVAHPVPAEDDTCNSQGRSEAQQPIYTKPLSPDARTSSLPESSPSKTAKKFQAPARESCVECQKTVYPMERLLANQQVFHISCFRCSYCNNKLSLGTYASLHGRIYCKPHFNQLFKSKGNYDEGFGHKQHKDLWASKGENEETLGRPAQPPSAGETPHSPGVEDAPIAKVGVLAASMEAKASSQREREENKPAETKKLRIAWPPPAEQGSSGSAPEEGFKVSKPKWPPEDEVCKTEAPEDVDLDLKKLRRSSSLKERSRPFTVAASFRTSSVKSPKPLSPSLRKGWSEPEPEQSEEFGGGTVTQTESPRPSREKESVGKSRWQSEEAEAEAEEAPRGRDGRSFELESESFIGNGASIAEDDVAPAQRSPLEPESPGWPGFGDTTTAKEFNQKSQDVGFWEGEVVRELSVEEQIKRNRYYDEDEDEE.

An N-acetylmethionine modification is found at Met-1. The residue at position 15 (Ser-15) is a Phosphoserine. The span at 43–56 (KAAEEANMERKKNN) shows a compositional bias: basic and acidic residues. The interval 43-151 (KAAEEANMER…YPRSEDSHDF (109 aa)) is disordered. The segment covering 88–97 (DSLPNSSSDG) has biased composition (polar residues). Ser-132 carries the post-translational modification Phosphoserine. A Required for interaction with NPC1L1 motif is present at residues 164–166 (CLG). Composition is skewed to basic and acidic residues over residues 168 to 177 (SRHEAEKPEM) and 199 to 208 (MMFEKGEHSQ). The segment at 168–226 (SRHEAEKPEMSENTETSGKIEKYNVPLNRLKMMFEKGEHSQNKSPWTQGRNAGGRRLSE) is disordered. Phosphoserine is present on residues Ser-225, Ser-230, and Ser-242. Positions 241–379 (LSSSAFNSEK…ESSPSKTAKK (139 aa)) are disordered. Over residues 249-258 (EKNESKRNLE) the composition is skewed to basic and acidic residues. The residue at position 263 (Ser-263) is a Phosphoserine. A compositionally biased stretch (basic and acidic residues) spans 292 to 305 (KPSESKTHKWEQKE). Residues 342 to 354 (CNSQGRSEAQQPI) show a composition bias toward polar residues. Phosphoserine is present on residues Ser-348, Ser-360, Ser-367, and Ser-372. Positions 363–375 (ARTSSLPESSPSK) are enriched in polar residues. The LIM zinc-binding domain maps to 386 to 446 (ESCVECQKTV…KPHFNQLFKS (61 aa)). Lys-437 is subject to N6-succinyllysine. Disordered regions lie at residues 468–493 (ENEE…GVED) and 505–714 (SMEA…DTTT). At Ser-488 the chain carries Phosphoserine. The interval 491 to 511 (VEDAPIAKVGVLAASMEAKAS) is required for interaction with MYO5B. 2 stretches are compositionally biased toward basic and acidic residues: residues 512-526 (SQRE…ETKK) and 555-566 (WPPEDEVCKTEA). A compositionally biased stretch (low complexity) spans 599 to 611 (SSVKSPKPLSPSL). 4 positions are modified to phosphoserine: Ser-600, Ser-603, Ser-608, and Ser-616. 2 stretches are compositionally biased toward basic and acidic residues: residues 638–653 (RPSR…RWQS) and 662–673 (EAPRGRDGRSFE). Phosphoserine is present on residues Ser-697, Ser-722, and Ser-737.

As to quaternary structure, interacts with NPC1L1; bridges NPC1L1 with MYO5B. Interacts with MYO5B; bridges MYO5B with NPC1L1. Interacts with PXN; this complex stabilizes actin dynamics. Interacts with F-actin and G-actin. Interacts with LUZP1 (via C-terminus); both proteins restrict ciliation and may work together to regulate this process. Binds RAB40B (GTP-bound); interaction influences LIMA1 subcellular localization in lamellipodia during cell migration. Phosphorylation of the C-terminal region by MAPK1/MAPK3 reduces its association with F-actin and contributes to actin filament reorganization and enhanced cell motility. In terms of processing, ubiquitinated by the ECS(RAB40B) complex leading to its degradation. As to expression, expressed throughout the kidney, including renal cortex, medulla, and glomeruli. Expressed in glomeruli, tubular epithelial cells, and extraglomerular vascular endothelial cells (at protein level).

The protein localises to the cytoplasm. The protein resides in the cell junction. Its subcellular location is the focal adhesion. It localises to the cytoskeleton. It is found in the stress fiber. The protein localises to the cell membrane. The protein resides in the cell projection. Its subcellular location is the ruffle. It localises to the lamellipodium. In terms of biological role, actin-binding protein involved in actin cytoskeleton regulation and dynamics. Increases the number and size of actin stress fibers and inhibits membrane ruffling. Inhibits actin filament depolymerization. Bundles actin filaments, delays filament nucleation and reduces formation of branched filaments. Acts as a negative regulator of primary cilium formation. Plays a role in cholesterol homeostasis. Influences plasma cholesterol levels through regulation of intestinal cholesterol absorption. May act as a scaffold protein by regulating NPC1L1 transportation, an essential protein for cholesterol absorption, to the plasma membrane by recruiting MYO5B to NPC1L1, and thus facilitates cholesterol uptake. This Rattus norvegicus (Rat) protein is LIM domain and actin-binding protein 1.